The chain runs to 239 residues: Ribosomal RNA small subunit methyltransferase G (239 aa).

S-adenosyl-L-methionine-binding positions include Gly77, Phe82, 128–129, and Arg146; that span reads AE. Positions 216-239 are disordered; the sequence is KRRQTSKKYPRKPGTPNKSPLVES.

It belongs to the methyltransferase superfamily. RNA methyltransferase RsmG family.

It is found in the cytoplasm. Its function is as follows. Specifically methylates the N7 position of guanine in position 535 of 16S rRNA. The sequence is that of Ribosomal RNA small subunit methyltransferase G from Staphylococcus epidermidis (strain ATCC 35984 / DSM 28319 / BCRC 17069 / CCUG 31568 / BM 3577 / RP62A).